Here is a 695-residue protein sequence, read N- to C-terminus: NADPH--cytochrome P450 reductase (695 aa).

Over 1 to 8 the chain is Lumenal; the sequence is MAQLDTLD. A helical membrane pass occupies residues 9-31; sequence LVVLVALLVGSVAYFTKGTYWAV. Topologically, residues 32–695 are cytoplasmic; it reads AKDPYASSGP…SGSYQEDVWS (664 aa). A Flavodoxin-like domain is found at 66 to 221; it reads CVIFYGSQTG…DFLAWKEPMW (156 aa). FMN contacts are provided by residues 72-77, 123-126, 169-178, and Asp-204; these read SQTGTA, ATYG, and LGNNTYEHYN. Residues 277–538 form the FAD-binding FR-type domain; the sequence is HNPFIAPIVE…HVRHSNFKLP (262 aa). Residue Arg-296 participates in NADP(+) binding. FAD is bound by residues 451–454, 469–471, and 486–489; these read RYYS, TAV, and GVTT. NADP(+) contacts are provided by residues Thr-552, 614-615, 620-624, and Glu-656; these read SR and KVYVQ. Residue Trp-694 participates in FAD binding.

This sequence belongs to the NADPH--cytochrome P450 reductase family. In the N-terminal section; belongs to the flavodoxin family. It in the C-terminal section; belongs to the flavoprotein pyridine nucleotide cytochrome reductase family. The cofactor is FAD. FMN serves as cofactor.

It is found in the endoplasmic reticulum membrane. Its subcellular location is the mitochondrion outer membrane. The protein localises to the cell membrane. It catalyses the reaction 2 oxidized [cytochrome P450] + NADPH = 2 reduced [cytochrome P450] + NADP(+) + H(+). Its function is as follows. This enzyme is required for electron transfer from NADP to cytochrome P450 in microsomes. It can also provide electron transfer to heme oxygenase and cytochrome B5. Involved in ergosterol biosynthesis. In Aspergillus oryzae (strain ATCC 42149 / RIB 40) (Yellow koji mold), this protein is NADPH--cytochrome P450 reductase.